The primary structure comprises 299 residues: NmrA-like family domain-containing protein 1 (299 aa).

NADP(+)-binding positions include 11–16, 37–41, 58–59, 79–81, Lys92, Lys133, and 155–158; these read GATGAQ, RDPGQ, DQ, TNY, and YFEN. An interaction with ASS1 region spans residues 153-189; sequence PCYFENLLSYFLPQKAPDGRSYLLSLPMGDVPIDGMS.

Belongs to the NmrA-type oxidoreductase family. Homodimer. Interacts with ASS1. Interaction is enhanced by low NADPH/NADP(+) ratios, which results in inhibition of ASS1 activity.

The protein localises to the cytoplasm. The protein resides in the perinuclear region. It localises to the nucleus. Its function is as follows. Redox sensor protein. Undergoes restructuring and subcellular redistribution in response to changes in intracellular NADPH/NADP(+) levels. At low NADPH concentrations the protein is found mainly as a monomer, and binds argininosuccinate synthase (ASS1), the enzyme involved in nitric oxide synthesis. Association with ASS1 impairs its activity and reduces the production of nitric oxide, which subsecuently prevents apoptosis. Under normal NADPH concentrations, the protein is found as a dimer and hides the binding site for ASS1. The homodimer binds one molecule of NADPH. Has higher affinity for NADPH than for NADP(+). Binding to NADPH is necessary to form a stable dimer. In Bos taurus (Bovine), this protein is NmrA-like family domain-containing protein 1 (NMRAL1).